A 124-amino-acid polypeptide reads, in one-letter code: SGPWMCYPGQAFQVPALPACRPLLRLQCNGSQVPEAVLRDCCQQLAHISEWCRCGALYSMLDSMYKEHGAQEGQAGTGAFPRCRREVVKLTAASITAVCRLPIVVDASGDGAYVCKDVAAYPDA.

5 disulfides stabilise this stretch: C6/C52, C20/C41, C28/C83, C42/C99, and C54/C115.

Belongs to the protease inhibitor I6 (cereal trypsin/alpha-amylase inhibitor) family. In terms of assembly, homodimer. The disulfide bonds are essential for the inhibitor activity. As to expression, endosperm.

The protein resides in the secreted. In terms of biological role, alpha-amylase inhibitor. In Triticum aestivum (Wheat), this protein is Alpha-amylase inhibitor 0.19.